Here is a 1059-residue protein sequence, read N- to C-terminus: Ubiquitin carboxyl-terminal hydrolase 36 (1059 aa).

2 disordered regions span residues L22–L45 and G102–R145. Polar residues predominate over residues G23–L45. Positions H121–N138 are enriched in low complexity. One can recognise a USP domain in the interval T168 to D457. C177 (nucleophile) is an active-site residue. H416 (proton acceptor) is an active-site residue. Disordered stretches follow at residues P464–G512, A554–N853, R941–Q1005, and F1022–T1059. Low complexity-rich tracts occupy residues S479–T494 and N561–N580. Phosphoserine is present on residues S490 and S492. The segment covering T603–E615 has biased composition (polar residues). Phosphothreonine occurs at positions 632 and 636. Phosphoserine occurs at positions 646 and 648. The span at E673–K702 shows a compositional bias: polar residues. Basic and acidic residues predominate over residues Q703–D720. S721 bears the Phosphoserine mark. Positions S721–P730 are enriched in acidic residues. Residues P740–A750 are compositionally biased toward low complexity. Residues P751 to P760 show a composition bias toward pro residues. S753 is subject to Phosphoserine. A Phosphothreonine modification is found at T756. S759 carries the phosphoserine modification. Residues D779–V788 show a composition bias toward acidic residues. T799 bears the Phosphothreonine mark. Positions N806 to P818 are enriched in polar residues. S817 carries the phosphoserine modification. T820 carries the phosphothreonine modification. Residues A833–N853 are compositionally biased toward polar residues. The span at S963–S974 shows a compositional bias: low complexity.

Belongs to the peptidase C19 family. As to quaternary structure, interacts with atms/PAF1, but not with CycT.

The protein resides in the nucleus. Its subcellular location is the nucleolus. It catalyses the reaction Thiol-dependent hydrolysis of ester, thioester, amide, peptide and isopeptide bonds formed by the C-terminal Gly of ubiquitin (a 76-residue protein attached to proteins as an intracellular targeting signal).. In terms of biological role, required for maintaining multiple types of adult stem cells, including male and female germline, epithelial follicle cell and intestinal stem cells. May function as a transcriptional repressor by continually deubiquiting histone H2B at the promoters of genes critical for cellular differentiation, thereby preventing histone H3 'Lys-4' trimethylation (H3K4). Controls selective autophagy activation by ubiquitinated proteins. This Drosophila sechellia (Fruit fly) protein is Ubiquitin carboxyl-terminal hydrolase 36 (Usp36).